A 146-amino-acid chain; its full sequence is Large ribosomal subunit protein uL16 (146 aa).

The protein belongs to the universal ribosomal protein uL16 family. As to quaternary structure, part of the 50S ribosomal subunit.

Its function is as follows. Binds 23S rRNA and is also seen to make contacts with the A and possibly P site tRNAs. This Caulobacter sp. (strain K31) protein is Large ribosomal subunit protein uL16.